A 161-amino-acid polypeptide reads, in one-letter code: Phosphopantetheine adenylyltransferase (161 aa).

Position 9 (Thr-9) interacts with substrate. Residues 9-10 (TF) and His-17 contribute to the ATP site. Residues Lys-41, Leu-73, and Arg-87 each contribute to the substrate site. Residues 88 to 90 (GLR), Glu-98, and 123 to 129 (YQFISGT) contribute to the ATP site.

The protein belongs to the bacterial CoaD family. In terms of assembly, homohexamer. The cofactor is Mg(2+).

Its subcellular location is the cytoplasm. The enzyme catalyses (R)-4'-phosphopantetheine + ATP + H(+) = 3'-dephospho-CoA + diphosphate. The protein operates within cofactor biosynthesis; coenzyme A biosynthesis; CoA from (R)-pantothenate: step 4/5. Functionally, reversibly transfers an adenylyl group from ATP to 4'-phosphopantetheine, yielding dephospho-CoA (dPCoA) and pyrophosphate. This chain is Phosphopantetheine adenylyltransferase, found in Cupriavidus metallidurans (strain ATCC 43123 / DSM 2839 / NBRC 102507 / CH34) (Ralstonia metallidurans).